The chain runs to 500 residues: Glycerol kinase (500 aa).

Position 16 (Thr-16) interacts with ADP. ATP contacts are provided by Thr-16 and Thr-17. Residue Thr-16 participates in sn-glycerol 3-phosphate binding. Arg-20 is an ADP binding site. Sn-glycerol 3-phosphate contacts are provided by Arg-86, Glu-87, Tyr-138, and Asp-243. 5 residues coordinate glycerol: Arg-86, Glu-87, Tyr-138, Asp-243, and Gln-244. The ADP site is built by Thr-265 and Gly-313. ATP contacts are provided by Thr-265, Gly-313, Gln-317, and Gly-414. Gly-414 and Asn-418 together coordinate ADP.

It belongs to the FGGY kinase family.

The enzyme catalyses glycerol + ATP = sn-glycerol 3-phosphate + ADP + H(+). It functions in the pathway polyol metabolism; glycerol degradation via glycerol kinase pathway; sn-glycerol 3-phosphate from glycerol: step 1/1. Inhibited by fructose 1,6-bisphosphate (FBP). Functionally, key enzyme in the regulation of glycerol uptake and metabolism. Catalyzes the phosphorylation of glycerol to yield sn-glycerol 3-phosphate. The protein is Glycerol kinase of Nostoc sp. (strain PCC 7120 / SAG 25.82 / UTEX 2576).